The following is a 227-amino-acid chain: UPF0173 metal-dependent hydrolase Bsph_4138 (227 aa).

The protein belongs to the UPF0173 family.

This chain is UPF0173 metal-dependent hydrolase Bsph_4138, found in Lysinibacillus sphaericus (strain C3-41).